The following is a 623-amino-acid chain: Transketolase (623 aa).

Met1 carries the post-translational modification N-acetylmethionine. A Phosphoserine modification is found at Ser3. Residues Lys6 and Lys11 each carry the N6-acetyllysine modification. Residue His37 participates in substrate binding. Positions 40 and 77 each coordinate thiamine diphosphate. The residue at position 104 (Ser104) is a Phosphoserine. 123–125 (GSL) provides a ligand contact to thiamine diphosphate. Residue Lys144 is modified to N6-acetyllysine. Asp155 provides a ligand contact to Mg(2+). Thiamine diphosphate-binding residues include Gly156 and Asn185. Mg(2+) contacts are provided by Asn185 and Leu187. 3 positions are modified to N6-acetyllysine: Lys204, Lys232, and Lys241. Thiamine diphosphate-binding residues include Lys244 and His258. A substrate-binding site is contributed by His258. Residue Lys260 is modified to N6-acetyllysine. Tyr275 is subject to Phosphotyrosine. The residue at position 287 (Thr287) is a Phosphothreonine. Ser295 bears the Phosphoserine mark. Positions 318 and 345 each coordinate substrate. Ser345 bears the Phosphoserine mark. Lys352 is covalently cross-linked (Glycyl lysine isopeptide (Lys-Gly) (interchain with G-Cter in SUMO2)). The active-site Proton donor is the Glu366. Thiamine diphosphate is bound at residue Phe392. 2 residues coordinate substrate: His416 and Asp424. Residue Gln428 coordinates thiamine diphosphate. Arg474 contributes to the substrate binding site. Lys538 and Lys603 each carry N6-acetyllysine.

It belongs to the transketolase family. Homodimer. It depends on Mg(2+) as a cofactor. Requires Ca(2+) as cofactor. Mn(2+) serves as cofactor. The cofactor is Co(2+). Thiamine diphosphate is required as a cofactor.

It carries out the reaction D-sedoheptulose 7-phosphate + D-glyceraldehyde 3-phosphate = aldehydo-D-ribose 5-phosphate + D-xylulose 5-phosphate. Functionally, catalyzes the transfer of a two-carbon ketol group from a ketose donor to an aldose acceptor, via a covalent intermediate with the cofactor thiamine pyrophosphate. The sequence is that of Transketolase (TKT) from Homo sapiens (Human).